The following is a 2196-amino-acid chain: Non-reducing polyketide synthase CTB1 (2196 aa).

The segment at Ala-11–His-250 is N-terminal acylcarrier protein transacylase domain (SAT). The 434-residue stretch at Lys-381 to Asp-814 folds into the Ketosynthase family 3 (KS3) domain. Residues Cys-553, His-688, and His-733 each act as for beta-ketoacyl synthase activity in the active site. A malonyl-CoA:ACP transacylase (MAT) domain region spans residues Ala-922 to Lys-1223. The tract at residues Ser-1298 to Val-1611 is product template (PT) domain. The tract at residues His-1302–Leu-1441 is N-terminal hotdog fold. A PKS/mFAS DH domain is found at His-1302–His-1608. Catalysis depends on His-1335, which acts as the Proton acceptor; for dehydratase activity. A C-terminal hotdog fold region spans residues Thr-1460–His-1608. The active-site Proton donor; for dehydratase activity is the Asp-1520. The tract at residues Lys-1617 to Lys-1666 is disordered. Residues Thr-1623–Ala-1636 are compositionally biased toward basic and acidic residues. 2 consecutive Carrier domains span residues Pro-1671–Ser-1748 and Asp-1775–Thr-1857. 2 positions are modified to O-(pantetheine 4'-phosphoryl)serine: Ser-1708 and Ser-1816. Residues Ser-1856–Pro-1867 are compositionally biased toward polar residues. The interval Ser-1856–Trp-1923 is disordered. The segment covering Ala-1872–Ser-1887 has biased composition (low complexity). The tract at residues Ile-1937–Met-2187 is thioesterase (TE) domain.

Pantetheine 4'-phosphate is required as a cofactor.

It carries out the reaction 6 malonyl-CoA + acetyl-CoA + 6 H(+) = nor-toralactone + 6 CO2 + 7 CoA + 2 H2O. It participates in mycotoxin biosynthesis. Its function is as follows. Polyketide synthase; part of the gene cluster that mediates the biosynthesis of cercosporin, a light-activated, non-host-selective toxin. The perylenequinone chromophore of cercosporin absorbs light energy to attain an electronically-activated triplet state and produces active oxygen species such as the hydroxyl radical, superoxide, hydrogen peroxide or singlet oxygen upon reaction with oxygen molecules. These reactive oxygen species cause damage to various cellular components including lipids, proteins and nucleic acids. The first step of cercosporin biosynthesis is performed by the polyketide synthase CTB1 which catalyzes the formation of nor-toralactone. The starter unit acyltransferase (SAT) domain of CTB1 initiates polyketide extension by the selective utilization of acetyl-CoA, which is elongated to the heptaketide in the beta-ketoacyl synthase (KS) domain by successive condensations with six malonyl units introduced by the malonyl acyltransferase (MAT) domain. The product template (PT) domain catalyzes C4-C9 and C2-C11 aldol cyclizations and dehydrations to a trihydroxynaphthalene, which is thought to be delivered to the thioesterase (TE) domain for product release. The bifunctional enzyme CTB3 then methylates nor-toralactone to toralactone before conducting an unusual oxidative aromatic ring opening. The O-methyltransferase CTB2 further methylates the nascent OH-6 of the CBT3 product, blocking further oxidation at this site before the reductase CTB6 reduces the 2-oxopropyl ketone at position C7, giving naphthalene. The FAD-dependent monooxygenase CTB5 in concert with the multicopper oxidase CTB12 are responsible for homodimerization of naphthalene with CTB7 installing the dioxepine moiety, finally producing cercosporin. The fasciclin domain-containing protein CTB11 might act with CTB5 and CTB12 whereas the roles of CTB9 and CTB10 have still to be elucidated. This Cercospora nicotianae (Barn spot disease fungus) protein is Non-reducing polyketide synthase CTB1.